A 232-amino-acid polypeptide reads, in one-letter code: Ornithine carbamoyltransferase (232 aa).

Carbamoyl phosphate-binding positions include Gln-15, Arg-39, and 66-69 (HPTQ). L-ornithine is bound by residues Asn-99, Asp-163, and 167–168 (SM). Carbamoyl phosphate is bound by residues 204 to 207 (HCLP) and Thr-232.

It belongs to the aspartate/ornithine carbamoyltransferase superfamily. OTCase family.

The protein localises to the cytoplasm. It carries out the reaction carbamoyl phosphate + L-ornithine = L-citrulline + phosphate + H(+). The protein operates within amino-acid biosynthesis; L-arginine biosynthesis; L-arginine from L-ornithine and carbamoyl phosphate: step 1/3. Its function is as follows. Reversibly catalyzes the transfer of the carbamoyl group from carbamoyl phosphate (CP) to the N(epsilon) atom of ornithine (ORN) to produce L-citrulline. In Neisseria perflava, this protein is Ornithine carbamoyltransferase (argF).